The following is a 316-amino-acid chain: MAPTDRNPVQVQYYAKGKKTTESSGPAPAPLILIHDGGGTTFAYFTIGRLERDVWAIHSPTFTSAQPWEGGMDGMAKHYIELIEKVAGIKGKILLGGWSLGGYVALTMAHMIASSPASFEISIDGILMMDSPWLVAGRDLPIGTPQPALIGIPDLVRKSLDNCERMLYHWELPQWGRSSGKAFKFSAGNEKFETQPGTVLYRSLKGDWRAVERTVSHELTEQQALQTPPSGPPPAVMLRSVIPAPTKGSSGKPCRVDQFRDELLLGWDGKYNTDMIHAVLEARSHHYDMFNQLYVDEVTETIKEAIQIIETVLPNE.

Belongs to the AMT4 thioesterase family.

It participates in secondary metabolite biosynthesis. In terms of biological role, probable thioesterase; part of the gene cluster that mediates the biosynthesis of the lipopeptide antibiotics leucinostatins that show extensive biological activities, including antimalarial, antiviral, antibacterial, antifungal, and antitumor activities, as well as phytotoxic. Leucinostatin A contains nine amino acid residues, including the unusual amino acid 4-methyl-L-proline (MePro), 2-amino-6-hydroxy-4-methyl-8-oxodecanoic acid (AHyMeOA), 3-hydroxyleucine (HyLeu), alpha-aminoisobutyric acid (AIB), beta-Ala, a 4-methylhex-2-enoic acid at the N-terminus as well as a N1,N1-dimethylpropane-1,2-diamine (DPD) at the C-terminus. The biosynthesis of leucinostatins is probably initiated with the assembly of 4-methylhex-2-enoic acid by a reducing PKS. Two reducing polyketide synthases, lcsB and lcsC, have been identified in the cluster and it is not clear which is the one that assembles 4-methylhex-2-enoic acid since both contain KS, AT, DH, cMT, ER, KR and ACP domains. The polyketide residue might be transferred to the NRPS lcsA, mediated by two additional enzymes, the acyl-CoA ligase lcsD and the thioesterase lcsE. The linear polyketide carboxylic acid, which is released from PKS, is converted to a CoA thioester by lcsD, and then lcsE hydrolyzes the thiol bond and shuttles the polyketide intermediate to lcsA. The C domain of the first module catalyzed the condensation of 4-methylhex-2-enoic acid and MePro carried by domain A1, followed by successive condensations of nine amino acids to trigger the elongation of the linear peptide. A5 and A6 domains of lcsA are proposed to incorporate leucine, A2 AHyMeOA, and A3 incorporates HyLeu. A4, A7 and A8 incorporate AIB. The AHyMeOA in leucinostatin A activated by the A2 might be produced by the second PKS (lcsB or lcsC) present within the cluster. The MePro is probably produced via leucine cyclization and may originate from a separate pathway, independent of the cluster. Another nonproteinogenic amino acid, beta-Ala, could be produced by an aspartic acid decarboxylase also localized outside of the cluster. Two candidates are VFPBJ_01400 and VFPBJ_10476. The final peptide scaffold may be released by the NAD(P)H-dependent thioester reductase (TE) at the C-terminal region of lcsA. Transamination of the lcsA product by the transaminase lcsP may produce DPD at the C-terminus. Further hydroxylation steps performed alternatively by the cytochrome P450 monooxygenases lcsI, lcsK and lcsN then yield the non-methylated leucinostatins precursor. It is also possible that leucines can be hydroxylated prior to their incorporation into the peptide. Varying extents of methylation then lead to the formation of leucinostatins A and B. The protein is Probable thioesterase lcsE of Purpureocillium lilacinum (Paecilomyces lilacinus).